The chain runs to 88 residues: Small ribosomal subunit protein bS16 (88 aa).

This sequence belongs to the bacterial ribosomal protein bS16 family.

The sequence is that of Small ribosomal subunit protein bS16 from Staphylococcus saprophyticus subsp. saprophyticus (strain ATCC 15305 / DSM 20229 / NCIMB 8711 / NCTC 7292 / S-41).